Here is a 617-residue protein sequence, read N- to C-terminus: MALEPIDATTHSRDIEQEYQKVVRGTDNDTTWLIISPNTQKEYLPSSTGSSFSDFLQSFDETKVEYGIARVSPPGSDVGKIILVGWCPDSAPMKTRASFAANFGTIANSVLPGYHIQVTARDEDDLDEEELLTKISNAAGARYSIQAAGNSVPTSSASGSAPVKKVFTPSLAKKESEPKKSFVPPPVREEPVPVNVVKDNDADDWDEPEIKERNFETNPLSDNKPAYEPIGKIDLKKVIAEETAKEDPRLINRIDPSADIAHLKQESKIHRDNDLDNLLKQEKTSSPAVGGTKPPLVNLIFVEMIIVIRLYKVSRPEKSPAQLWAEKKMKQNQQSDSAQEEQKPVETKTEIEIGVDNSDEMKIGDLKSRFEKLGAETETEPEPPVQWETDSIPTVVKPQTFGQPAANSKPATQEVKKPFTPSNIGQRLPGMHTETPEHEEEDNDDDWGEDEDEPPKRNIPPPVMPARESAPQQPLPPRNTEPEPVEEGEEEEEEEEEEEEEAPAPSLPSRNAAPEPEPEQPQEEEEEEEAPAPSLPSRGSVPPPPPQRAVEPEEPAAEAPWATAEYDYEAGEDNELTFAENDKIINIEFVDDDWWLGELETTGQKGLFPSNYVVLGN.

An ADF-H domain is found at 7 to 136 (DATTHSRDIE…DEEELLTKIS (130 aa)). Disordered regions lie at residues 169–223 (PSLA…LSDN) and 325–574 (AEKK…GEDN). A 1-1 repeat occupies 202–211 (ADDWDEPEIK). The 3 X 10 AA approximate repeats stretch occupies residues 202 to 600 (ADDWDEPEIK…DDDWWLGELE (399 aa)). Basic and acidic residues-rich tracts occupy residues 340 to 351 (EEQKPVETKTEI) and 359 to 375 (DEMK…KLGA). Residues 400-411 (TFGQPAANSKPA) show a composition bias toward polar residues. 3 stretches are compositionally biased toward acidic residues: residues 437–453 (EHEE…DEDE), 483–502 (EPVE…EEEA), and 516–530 (PEPE…EEEA). Tandem repeats lie at residues 444–453 (DDDWGEDEDE), 495–510 (EEEE…LPSR), 523–538 (EEEE…LPSR), and 591–600 (DDDWWLGELE). Residues 495 to 538 (EEEEEEEAPAPSLPSRNAAPEPEPEQPQEEEEEEEAPAPSLPSR) are 2 X 16 AA repeats of E(7)-A-P-A-P-S-L-P-S-R. An SH3 domain is found at 557–617 (AEAPWATAEY…FPSNYVVLGN (61 aa)).

It localises to the cytoplasm. Its subcellular location is the cytoskeleton. Functionally, may be involved in the spatial organization of cell surface growth. An overproduction of ABP1 causes the assembly of the cortical actin skeleton at inappropriate sites on the cell surface, resulting in delocalized surface growth. The chain is Actin-binding protein (ABP1) from Maudiozyma exigua (Yeast).